Reading from the N-terminus, the 94-residue chain is Co-chaperonin GroES (94 aa).

The protein belongs to the GroES chaperonin family. Heptamer of 7 subunits arranged in a ring. Interacts with the chaperonin GroEL.

The protein resides in the cytoplasm. Together with the chaperonin GroEL, plays an essential role in assisting protein folding. The GroEL-GroES system forms a nano-cage that allows encapsulation of the non-native substrate proteins and provides a physical environment optimized to promote and accelerate protein folding. GroES binds to the apical surface of the GroEL ring, thereby capping the opening of the GroEL channel. This Pediococcus pentosaceus (strain ATCC 25745 / CCUG 21536 / LMG 10740 / 183-1w) protein is Co-chaperonin GroES.